Reading from the N-terminus, the 75-residue chain is Cruzioseptin-6 (75 aa).

Residues 1-22 (MAYLKKSLFLVLFLGLVSLSIC) form the signal peptide. A propeptide spanning residues 23–43 (EEEKREEENEEEQEDDDQSEE) is cleaved from the precursor. The segment at 24-44 (EEKREEENEEEQEDDDQSEEK) is disordered. Residues 30–41 (ENEEEQEDDDQS) are compositionally biased toward acidic residues.

Expressed by the skin glands.

It is found in the secreted. Its function is as follows. Has antimicrobial activity. This Cruziohyla calcarifer (Splendid leaf frog) protein is Cruzioseptin-6.